The following is a 475-amino-acid chain: MKSELIFLPAPAIGHLVGMVEMAKLFISRHENLSVTVLIAKFYMDTGVDNYNKSLLTNPTPRLTIVNLPETDPQNYMLKPRHAIFPSVIETQKTHVRDIISGMTQSESTRVVGLLADLLFINIMDIANEFNVPTYVYSPAGAGHLGLAFHLQTLNDKKQDVTEFRNSDTELLVPSFANPVPAEVLPSMYVDKEGGYDYLFSLFRRCRESKAIIINTFEELEPYAINSLRMDSMIPPIYPVGPILNLNGDGQNSDEAAVILGWLDDQPPSSVVFLCFGSYGTFQENQVKEIAMGLERSGHRFLWSLRPSIPKGETKLQLKYSNLEEILPVGFLDRTSCVGKVIGWAPQVAVLGHEAVGGFLSHCGWNSTLESVWCGVPVATWPMYGEQQLNAFEMVKELGIAVEIEVDYKNEYFNMNNDFIVRAEEIETKIKKLMMDEKNSEIRKKVKEMKEKSRLAMSENGSSYNSLAKLFEEIM.

His-15 acts as the Proton acceptor in catalysis. An anthocyanidin is bound at residue His-15. Asp-117 (charge relay) is an active-site residue. Positions 345, 347, 362, 365, 366, 367, and 370 each coordinate UDP-alpha-D-glucose. Residue Gly-385 participates in an anthocyanidin binding. Positions 386 and 387 each coordinate UDP-alpha-D-glucose.

This sequence belongs to the UDP-glycosyltransferase family.

The enzyme catalyses (20S)-protopanaxadiol + UDP-alpha-D-glucose = (20S)-ginsenoside C-K + UDP + H(+). It catalyses the reaction (20S)-ginsenoside Rg3 + UDP-alpha-D-glucose = (20S)-ginsenoside Rd + UDP + H(+). It carries out the reaction (20S)-protopanaxatriol + UDP-alpha-D-glucose = (20S)-ginsenoside F1 + UDP + H(+). The catalysed reaction is (20S)-ginsenoside F1 + UDP-alpha-D-glucose = (20S)-ginsenoside Rg1 + UDP + H(+). It functions in the pathway secondary metabolite biosynthesis; terpenoid biosynthesis. Component of the dammarane-type triterpene saponins (e.g. ginsenosides or panaxosides) biosynthetic pathway. Glycosyltransferase that catalyzes the biosynthesis of ginsenoside F1 from protopanaxatriol (PPT) and the conversion of ginsenoside F1 to ginsenoside Rg1. Triggers C20-OH glycosylation of ginsenoside Rg3 to produce ginsenoside Rd. Mediates the conversion of protopanaxadiol (PPD) to the ginsenoside compound K. The sequence is that of UDP-glycosyltransferase 101 from Panax ginseng (Korean ginseng).